The following is a 369-amino-acid chain: Coiled-coil domain-containing protein 149 (369 aa).

Residues Met-1–Val-249 adopt a coiled-coil conformation.

It belongs to the CCDC149 family. In terms of tissue distribution, expressed in amphid and phasmid ciliated neurons, and also pharyngeal, touch receptor and motor neurons.

The protein resides in the cell projection. Its subcellular location is the cilium. This chain is Coiled-coil domain-containing protein 149, found in Caenorhabditis elegans.